The primary structure comprises 323 residues: Sphingolipid delta(4)-desaturase DES1 (323 aa).

Helical transmembrane passes span 41 to 61 (HNLI…FYLV) and 68 to 88 (WLLF…TLAI). A Histidine box-1 motif is present at residues 89–93 (HEISH). A helical transmembrane segment spans residues 104 to 124 (WNRCFGMFANLPLGLPYSVSF). The Histidine box-2 signature appears at 128–132 (HMDHH). A run of 3 helical transmembrane segments spans residues 152–172 (FFCT…FYTI), 185–205 (LEII…YTLG), and 210–230 (FYML…GHFI). The Histidine box-3 signature appears at 259–263 (HNEHH).

This sequence belongs to the fatty acid desaturase type 1 family. DEGS subfamily. In terms of assembly, interacts with RLBP1; the interaction increases synthesis of chromophore-precursors by DEGS1.

Its subcellular location is the endoplasmic reticulum membrane. The catalysed reaction is an N-acylsphinganine + 2 Fe(II)-[cytochrome b5] + O2 + 2 H(+) = an N-acylsphing-4-enine + 2 Fe(III)-[cytochrome b5] + 2 H2O. It catalyses the reaction all-trans-retinol = 11-cis-retinol. It carries out the reaction all-trans-retinol = 9-cis-retinol. The enzyme catalyses all-trans-retinol = 13-cis-retinol. The catalysed reaction is 11-cis-retinol = 13-cis-retinol. It catalyses the reaction 11-cis-retinol = 9-cis-retinol. Has sphingolipid-delta-4-desaturase activity. Converts D-erythro-sphinganine to D-erythro-sphingosine (E-sphing-4-enine). Catalyzes the equilibrium isomerization of retinols. The protein is Sphingolipid delta(4)-desaturase DES1 (degs1) of Xenopus tropicalis (Western clawed frog).